A 23-amino-acid polypeptide reads, in one-letter code: ANQRLPPLSNDPDRCERAFVGNT.

The tract at residues 1–23 (ANQRLPPLSNDPDRCERAFVGNT) is disordered.

It is found in the plastid. The protein resides in the chloroplast thylakoid lumen. This chain is Thylakoid lumenal 17.4 kDa protein, found in Spinacia oleracea (Spinach).